Here is a 426-residue protein sequence, read N- to C-terminus: Metacaspase-1B (426 aa).

Over residues 1–14 the composition is skewed to gly residues; it reads MSGYPGAGYNGGGY. Residues 1–111 are disordered; the sequence is MSGYPGAGYN…QAPPPPPQAP (111 aa). Low complexity predominate over residues 21 to 68; that stretch reads QYGGYYPPQPAYNAYQQPPPQQQQYMVYHQPSPGPQQHQHWNPQQQTP. Residues histidine 217 and cysteine 273 contribute to the active site.

It belongs to the peptidase C14B family.

Involved in cell death (apoptosis). The sequence is that of Metacaspase-1B (casB) from Neurospora crassa (strain ATCC 24698 / 74-OR23-1A / CBS 708.71 / DSM 1257 / FGSC 987).